Reading from the N-terminus, the 252-residue chain is Large ribosomal subunit protein uL4 (252 aa).

The protein belongs to the universal ribosomal protein uL4 family. In terms of assembly, part of the 50S ribosomal subunit.

Its function is as follows. One of the primary rRNA binding proteins, this protein initially binds near the 5'-end of the 23S rRNA. It is important during the early stages of 50S assembly. It makes multiple contacts with different domains of the 23S rRNA in the assembled 50S subunit and ribosome. Functionally, forms part of the polypeptide exit tunnel. In Methanococcus maripaludis (strain DSM 14266 / JCM 13030 / NBRC 101832 / S2 / LL), this protein is Large ribosomal subunit protein uL4.